The primary structure comprises 357 residues: Phenylalanine--tRNA ligase alpha subunit (357 aa).

Position 278 (glutamate 278) interacts with Mg(2+).

This sequence belongs to the class-II aminoacyl-tRNA synthetase family. Phe-tRNA synthetase alpha subunit type 1 subfamily. In terms of assembly, tetramer of two alpha and two beta subunits. Mg(2+) serves as cofactor.

Its subcellular location is the cytoplasm. The enzyme catalyses tRNA(Phe) + L-phenylalanine + ATP = L-phenylalanyl-tRNA(Phe) + AMP + diphosphate + H(+). In Albidiferax ferrireducens (strain ATCC BAA-621 / DSM 15236 / T118) (Rhodoferax ferrireducens), this protein is Phenylalanine--tRNA ligase alpha subunit.